Here is a 308-residue protein sequence, read N- to C-terminus: Aspartate carbamoyltransferase catalytic subunit (308 aa).

Positions 50 and 51 each coordinate carbamoyl phosphate. Lys-78 lines the L-aspartate pocket. Residues Arg-100, His-131, and Gln-134 each contribute to the carbamoyl phosphate site. Residues Arg-164 and Arg-216 each contribute to the L-aspartate site. Carbamoyl phosphate-binding residues include Ala-259 and Pro-260.

The protein belongs to the aspartate/ornithine carbamoyltransferase superfamily. ATCase family. Heterododecamer (2C3:3R2) of six catalytic PyrB chains organized as two trimers (C3), and six regulatory PyrI chains organized as three dimers (R2).

It carries out the reaction carbamoyl phosphate + L-aspartate = N-carbamoyl-L-aspartate + phosphate + H(+). The protein operates within pyrimidine metabolism; UMP biosynthesis via de novo pathway; (S)-dihydroorotate from bicarbonate: step 2/3. Catalyzes the condensation of carbamoyl phosphate and aspartate to form carbamoyl aspartate and inorganic phosphate, the committed step in the de novo pyrimidine nucleotide biosynthesis pathway. This Oenococcus oeni (strain ATCC BAA-331 / PSU-1) protein is Aspartate carbamoyltransferase catalytic subunit.